The chain runs to 151 residues: Protein SprT-like (151 aa).

The 141-residue stretch at glutamine 7–histidine 147 folds into the SprT-like domain. Residue histidine 67 coordinates Zn(2+). Glutamate 68 is an active-site residue. Histidine 71 is a binding site for Zn(2+).

It belongs to the SprT family. Zn(2+) serves as cofactor.

The protein localises to the cytoplasm. In Staphylococcus carnosus (strain TM300), this protein is Protein SprT-like.